Reading from the N-terminus, the 157-residue chain is Small ribosomal subunit protein uS7 (157 aa).

Belongs to the universal ribosomal protein uS7 family. Part of the 30S ribosomal subunit. Contacts proteins S9 and S11.

Its function is as follows. One of the primary rRNA binding proteins, it binds directly to 16S rRNA where it nucleates assembly of the head domain of the 30S subunit. Is located at the subunit interface close to the decoding center, probably blocks exit of the E-site tRNA. This is Small ribosomal subunit protein uS7 from Marinomonas sp. (strain MWYL1).